The primary structure comprises 138 residues: Large ribosomal subunit protein uL16 (138 aa).

Residues 1 to 13 are compositionally biased toward basic residues; sequence MLQPARRKYRKEQ. Residues 1 to 22 form a disordered region; sequence MLQPARRKYRKEQKGRNTGVAT.

The protein belongs to the universal ribosomal protein uL16 family. In terms of assembly, part of the 50S ribosomal subunit.

Its function is as follows. Binds 23S rRNA and is also seen to make contacts with the A and possibly P site tRNAs. This Paracidovorax citrulli (strain AAC00-1) (Acidovorax citrulli) protein is Large ribosomal subunit protein uL16.